Consider the following 533-residue polypeptide: Na(+)/H(+) antiporter NhaB (533 aa).

The next 11 helical transmembrane spans lie at 10 to 30 (IGNFLGNSPKWYKIAILSFLI), 67 to 87 (PGGLLAIEAVAIGMTSASQVL), 96 to 116 (VLLLLVFMVAGIYFMKQLLLF), 131 to 165 (VSLLFCLASAFLSAFLDALTVIAVIITVAVGFYSI), 209 to 229 (LLMHAGVGTALGGVCTMVGEP), 247 to 267 (IRMSPVTVPVFIAGILTCYIV), 310 to 330 (AFIGVWLIAGLALHLASVGLI), 355 to 375 (EEALPFTALLAVFFSVVAVII), 396 to 416 (LVIFYIANGLLSMVSDNVFVG), 454 to 474 (ATPNGQAAFLFLLTSALAPLI), and 485 to 505 (ALPYTIVLSIVGVMAIQIGFL).

It belongs to the NhaB Na(+)/H(+) (TC 2.A.34) antiporter family.

The protein resides in the cell inner membrane. The catalysed reaction is 2 Na(+)(in) + 3 H(+)(out) = 2 Na(+)(out) + 3 H(+)(in). Its function is as follows. Na(+)/H(+) antiporter that extrudes sodium in exchange for external protons. This Shewanella oneidensis (strain ATCC 700550 / JCM 31522 / CIP 106686 / LMG 19005 / NCIMB 14063 / MR-1) protein is Na(+)/H(+) antiporter NhaB.